The primary structure comprises 206 residues: Photosynthetic reaction center cytochrome c-551 (206 aa).

3 consecutive transmembrane segments (helical) span residues 10 to 30 (IALA…VSFL), 49 to 69 (FMGW…LGKM), and 76 to 96 (KWFL…FFSL). Positions 152, 155, 156, and 182 each coordinate heme.

In terms of assembly, component of the photosynthetic reaction center. The reaction center interacts with the Fenna-Matthews-Olson (FMO, fmoA) complex. In terms of processing, binds 1 heme group per subunit.

Its subcellular location is the cell inner membrane. In terms of biological role, monoheme cytochrome which is the immediate electron donor to P840 of the photosynthetic reaction center complex. In Chlorobaculum parvum (strain DSM 263 / NCIMB 8327) (Chlorobium vibrioforme subsp. thiosulfatophilum), this protein is Photosynthetic reaction center cytochrome c-551 (pscC).